Consider the following 365-residue polypeptide: UDP-N-acetylglucosamine--N-acetylmuramyl-(pentapeptide) pyrophosphoryl-undecaprenol N-acetylglucosamine transferase (365 aa).

UDP-N-acetyl-alpha-D-glucosamine contacts are provided by residues 12–14 (TGG), Asn123, Arg166, Ser194, and Gln295.

It belongs to the glycosyltransferase 28 family. MurG subfamily.

The protein resides in the cell inner membrane. It catalyses the reaction di-trans,octa-cis-undecaprenyl diphospho-N-acetyl-alpha-D-muramoyl-L-alanyl-D-glutamyl-meso-2,6-diaminopimeloyl-D-alanyl-D-alanine + UDP-N-acetyl-alpha-D-glucosamine = di-trans,octa-cis-undecaprenyl diphospho-[N-acetyl-alpha-D-glucosaminyl-(1-&gt;4)]-N-acetyl-alpha-D-muramoyl-L-alanyl-D-glutamyl-meso-2,6-diaminopimeloyl-D-alanyl-D-alanine + UDP + H(+). Its pathway is cell wall biogenesis; peptidoglycan biosynthesis. Its function is as follows. Cell wall formation. Catalyzes the transfer of a GlcNAc subunit on undecaprenyl-pyrophosphoryl-MurNAc-pentapeptide (lipid intermediate I) to form undecaprenyl-pyrophosphoryl-MurNAc-(pentapeptide)GlcNAc (lipid intermediate II). In Phenylobacterium zucineum (strain HLK1), this protein is UDP-N-acetylglucosamine--N-acetylmuramyl-(pentapeptide) pyrophosphoryl-undecaprenol N-acetylglucosamine transferase.